The chain runs to 89 residues: Small ribosomal subunit protein uS14A (89 aa).

Belongs to the universal ribosomal protein uS14 family. As to quaternary structure, part of the 30S ribosomal subunit. Contacts proteins S3 and S10.

Binds 16S rRNA, required for the assembly of 30S particles and may also be responsible for determining the conformation of the 16S rRNA at the A site. This chain is Small ribosomal subunit protein uS14A, found in Staphylococcus aureus (strain MRSA252).